The following is a 76-amino-acid chain: Rhesus theta defensin-1/3 subunit A (76 aa).

An N-terminal signal peptide occupies residues 1-22; it reads MRTFALLTAMLLLVALHAQAEA. Positions 23 to 64 are excised as a propeptide; the sequence is RQARADEAAAQQQPGTDDQGMAHSFTWPENAALPLSESAKGL. The interval 25 to 45 is disordered; it reads ARADEAAAQQQPGTDDQGMAH. Arginine 65 is covalently cross-linked (Cyclopeptide (Arg-Cys) (interchain with C-73 in subunit A); in form RTD-3). A Cyclopeptide (Arg-Cys) (interchain with C-73 in subunit B); in form RTD-1 cross-link involves residue arginine 65. A disulfide bridge connects residues cysteine 68 and cysteine 73. Residue cysteine 73 forms a Cyclopeptide (Cys-Arg) (interchain with R-65 in subunit A); in form RTD-3 linkage. Cysteine 73 participates in a covalent cross-link: Cyclopeptide (Cys-Arg) (interchain with R-65 in subunit B); in form RTD-1. Residues 74-76 constitute a propeptide that is removed on maturation; it reads RLL.

Belongs to the alpha-defensin family. Theta subfamily. RTD-1 is a cyclic heterodimer composed of subunits A and B; disulfide-linked. RTD-3 is a cyclic homodimer composed of two subunits A; disulfide-linked. In terms of processing, forms a cyclic peptide with subunit A (RTD-3) or with subunit B (RTD-1). An additional intersubunit disulfide bond is formed. As to expression, RTD-1 is expressed in bone marrow. Detected in promyelocytes, myelocytes and mature neutrophils and monocytes.

RTD-1 and RTD-3 have similar antimicrobial activities against the Gram-positive bacteria S.aureus 502A and L.monocytogenes, the Gram-negative bacteria S.typhimurium and E.coli ML35, and the fungi C.albicans 16820 and C.neoformans 271A. This Macaca mulatta (Rhesus macaque) protein is Rhesus theta defensin-1/3 subunit A (RTD1A).